The chain runs to 356 residues: Arginine kinase (356 aa).

The 84-residue stretch at 8–91 (EKLEAGFKKL…FDPIIEDYHG (84 aa)) folds into the Phosphagen kinase N-terminal domain. 64–68 (GVGIY) contacts substrate. Positions 119-356 (YVISTRVRCG…LELIKIEGSL (238 aa)) constitute a Phosphagen kinase C-terminal domain. ATP is bound by residues 122-126 (STRVR) and His185. Position 225 (Glu225) interacts with substrate. ATP is bound at residue Arg229. Position 271 (Cys271) interacts with substrate. ATP is bound by residues 280–284 (RASVH) and 309–314 (RGSTGE). A substrate-binding site is contributed by Glu314.

Belongs to the ATP:guanido phosphotransferase family.

The enzyme catalyses L-arginine + ATP = N(omega)-phospho-L-arginine + ADP + H(+). This chain is Arginine kinase (ARGK), found in Schistocerca americana (American grasshopper).